Here is a 475-residue protein sequence, read N- to C-terminus: 3-isopropylmalate dehydratase large subunit (475 aa).

3 residues coordinate [4Fe-4S] cluster: C353, C414, and C417.

This sequence belongs to the aconitase/IPM isomerase family. LeuC type 1 subfamily. Heterodimer of LeuC and LeuD. [4Fe-4S] cluster serves as cofactor.

It carries out the reaction (2R,3S)-3-isopropylmalate = (2S)-2-isopropylmalate. Its pathway is amino-acid biosynthesis; L-leucine biosynthesis; L-leucine from 3-methyl-2-oxobutanoate: step 2/4. Catalyzes the isomerization between 2-isopropylmalate and 3-isopropylmalate, via the formation of 2-isopropylmaleate. The chain is 3-isopropylmalate dehydratase large subunit from Marinomonas sp. (strain MWYL1).